The following is a 263-amino-acid chain: MAFLWLVSCFALVGATFGCGVPTIQPVLTGLSRIVNGEDAIPGSWPWQVSLQDKTGFHFCGGSLISEDWVVTAAHCGVKTSDVVVAGEFDQGSDEENIQVLKIAQVFKNPKFNMFTVRNDITLLKLATPAQFSETVSAVCLPNVDDDFPPGTVCATTGWGKTKYNALKTPEKLQQAALPIVSEADCKKSWGSKITDVMTCAGASGVSSCMGDSGGPLVCQKDGVWTLAGIVSWGSGVCSTSTPAVYSRVTALMPWVQQILEAN.

The N-terminal stretch at 1 to 18 (MAFLWLVSCFALVGATFG) is a signal peptide. 5 disulfide bridges follow: C19/C140, C60/C76, C154/C219, C186/C200, and C209/C238. The region spanning 34-261 (IVNGEDAIPG…LMPWVQQILE (228 aa)) is the Peptidase S1 domain. Residue H75 is the Charge relay system of the active site. A Phosphoserine modification is found at S93. The Charge relay system role is filled by D120. S213 (charge relay system) is an active-site residue.

Belongs to the peptidase S1 family.

The protein localises to the secreted. Its subcellular location is the extracellular space. It catalyses the reaction Preferential cleavage: Tyr-|-Xaa, Trp-|-Xaa, Phe-|-Xaa, Leu-|-Xaa.. The chain is Chymotrypsinogen B (Ctrb1) from Rattus norvegicus (Rat).